Consider the following 47-residue polypeptide: DRDSCVDKSRCQKYGPYGQCTDCCKKAGHTGGTCIYFKCKCGAESGR.

Disulfide bonds link Cys-5-Cys-23, Cys-11-Cys-34, Cys-20-Cys-39, and Cys-24-Cys-41.

Belongs to the ergtoxin family. Gamma-KTx 5 subfamily. As to expression, expressed by the venom gland.

The protein resides in the secreted. Reversibly blocks Kv11/ERG potassium channels. This chain is Potassium channel toxin gamma-KTx 5.2, found in Centruroides gracilis (Slenderbrown scorpion).